A 684-amino-acid chain; its full sequence is Threonine--tRNA ligase (684 aa).

One can recognise a TGS domain in the interval 1–66 (MTAVASSAPA…DTDVEVTPVA (66 aa)). Residues 261 to 567 (DHRKLGVELD…LTEHYAGAFP (307 aa)) form a catalytic region. The Zn(2+) site is built by Cys-366, His-417, and His-544.

The protein belongs to the class-II aminoacyl-tRNA synthetase family. As to quaternary structure, homodimer. It depends on Zn(2+) as a cofactor.

Its subcellular location is the cytoplasm. The enzyme catalyses tRNA(Thr) + L-threonine + ATP = L-threonyl-tRNA(Thr) + AMP + diphosphate + H(+). In terms of biological role, catalyzes the attachment of threonine to tRNA(Thr) in a two-step reaction: L-threonine is first activated by ATP to form Thr-AMP and then transferred to the acceptor end of tRNA(Thr). Also edits incorrectly charged L-seryl-tRNA(Thr). The chain is Threonine--tRNA ligase from Mycolicibacterium smegmatis (strain ATCC 700084 / mc(2)155) (Mycobacterium smegmatis).